The following is a 151-amino-acid chain: Deoxyuridine 5'-triphosphate nucleotidohydrolase (151 aa).

Substrate-binding positions include 70–72 (RSG), asparagine 83, 87–89 (LID), and methionine 97.

It belongs to the dUTPase family. The cofactor is Mg(2+).

It carries out the reaction dUTP + H2O = dUMP + diphosphate + H(+). Its pathway is pyrimidine metabolism; dUMP biosynthesis; dUMP from dCTP (dUTP route): step 2/2. This enzyme is involved in nucleotide metabolism: it produces dUMP, the immediate precursor of thymidine nucleotides and it decreases the intracellular concentration of dUTP so that uracil cannot be incorporated into DNA. The sequence is that of Deoxyuridine 5'-triphosphate nucleotidohydrolase from Actinobacillus pleuropneumoniae serotype 5b (strain L20).